Consider the following 102-residue polypeptide: Matrix Gla protein (102 aa).

A phosphoserine mark is found at serine 2, serine 3, and serine 5. The interval 18–45 (DANSFMRQPRPPNHWDSRDRFKSPRERT) is disordered. Residues 27–73 (RPPNHWDSRDRFKSPRERTREKCEEYRPCERLARQVGLKRAYGKYFG) enclose the Gla domain. Residues 30–45 (NHWDSRDRFKSPRERT) are compositionally biased toward basic and acidic residues. 4-carboxyglutamate is present on residues glutamate 43, glutamate 47, glutamate 50, and glutamate 51. Cysteine 49 and cysteine 55 form a disulfide bridge. Residues 72-102 (FGNRRQRPSTSGRLRPRKYRASRYRNHHYRY) form a disordered region. The segment covering 85 to 102 (LRPRKYRASRYRNHHYRY) has biased composition (basic residues).

This sequence belongs to the osteocalcin/matrix Gla protein family. In terms of processing, requires vitamin K-dependent gamma-carboxylation for its function. In terms of tissue distribution, accounts for 35-40% of the total protein in the acid demineralization extract of calcified cartilage.

The protein resides in the secreted. Its function is as follows. Associates with the organic matrix of calcified cartilage. The chain is Matrix Gla protein (mgp) from Galeorhinus galeus (Tope shark).